Reading from the N-terminus, the 548-residue chain is Mannosyltransferase APTG1 (548 aa).

Residues 1–23 are disordered; sequence MDIRKRKNAGGDGDGGADGASVN. A run of 3 helical transmembrane segments spans residues 41–61, 98–118, and 146–166; these read IFLFCLAFRVVNALLIQTYFN, LFAFLYKLLQVTGLDTPYIMI, and GNVATWSLFCQMANWFIFFCL. An N-linked (GlcNAc...) asparagine glycan is attached at Asn167. The next 7 helical transmembrane spans lie at 169–189, 204–224, 238–258, 260–280, 294–314, 320–340, and 342–362; these read TFSNCLETVLTIMGLYYWPCI, LVIAALACAIRPTSAVIWLYV, FIILEVIPIGSLVLGFTCLLD, LMYGSWVIVPLNFLKFNFLSS, FTQGFLVMLFTFTPFSIAGII, KLSALILWVLAIYSILGHKEF, and FVLPVLPIALIFSGYAFAQME. The N-linked (GlcNAc...) asparagine glycan is linked to Asn382. A helical transmembrane segment spans residues 392-412; sequence LSVYFLLATNIPMALYMSLFH. The N-linked (GlcNAc...) asparagine glycan is linked to Asn490.

It belongs to the glycosyltransferase 22 family. Mostly expressed, mainly in vascular tissues, in leaves, roots, stems, flowers, siliques and pollen, and, to a lower extent, in seedlings.

It localises to the endoplasmic reticulum membrane. Mannosyltransferase involved in glycosylphosphatidylinositol-anchor biosynthesis. Required for the pollen tube micropylar guidance and embryo development by regulating GPI-anchor mediated protein localization (e.g. COBL10 and A36). The chain is Mannosyltransferase APTG1 from Arabidopsis thaliana (Mouse-ear cress).